The chain runs to 384 residues: Glycerol 3-phosphate oxidase (384 aa).

A signal peptide spans Met-1–Ser-17. An FAD-binding site is contributed by Ile-14. Cys-18 carries N-palmitoyl cysteine lipidation. Cys-18 carries the S-diacylglycerol cysteine lipid modification. Residues Glu-33, Thr-42–Ser-43, and Ser-47–Val-49 each bind FAD. Positions 47 and 51 each coordinate sn-glycerol 3-phosphate. His-51 acts as the Proton acceptor in catalysis. Residue Val-177 participates in FAD binding. Sn-glycerol 3-phosphate contacts are provided by Lys-258 and Arg-320. Met-346–Lys-347 provides a ligand contact to FAD. Position 348 (Ser-348) interacts with sn-glycerol 3-phosphate. Thr-352 contributes to the FAD binding site.

As to quaternary structure, monomer. FAD is required as a cofactor.

It is found in the cytoplasm. Its subcellular location is the cell membrane. The enzyme catalyses sn-glycerol 3-phosphate + O2 = dihydroxyacetone phosphate + H2O2. It functions in the pathway polyol metabolism; glycerol degradation via glycerol kinase pathway; glycerone phosphate from sn-glycerol 3-phosphate (aerobic route): step 1/1. Functionally, catalyzes the oxidation of glycerol 3-phosphate to dihydroxyacetone phosphate (DHAP), with a reduction of O2 to H2O2. The formation of hydrogen peroxide by this enzyme is crucial for cytotoxic effects on host cells. Does not show any dehydrogenase activity with NAD(+). The polypeptide is Glycerol 3-phosphate oxidase (Mycoplasma genitalium (strain ATCC 33530 / DSM 19775 / NCTC 10195 / G37) (Mycoplasmoides genitalium)).